The following is a 786-amino-acid chain: Rho GTPase-activating protein 10 (786 aa).

A BAR domain is found at 7 to 262 (EFSDCYLDSP…IRQNPKDHKR (256 aa)). The PH domain occupies 265–372 (QFTAEGYLYV…WLEALGGKEA (108 aa)). One can recognise a Rho-GAP domain in the interval 389–574 (AQLDKMGFTI…ILIENHEKIF (186 aa)). 2 disordered regions span residues 576 to 608 (TPPD…QRTK) and 621 to 727 (EDGD…PPES). Over residues 599–608 (QSKRQGQRTK) the composition is skewed to basic residues. Positions 634–651 (PTSSLDSLSSPSPVTTAV) are enriched in low complexity. Residues 676–688 (IPGQTRSSMVQWL) are compositionally biased toward polar residues. A compositionally biased stretch (low complexity) spans 689 to 712 (NPQSPTTTSSNSAVTPLSPGSSPF). The 59-residue stretch at 728-786 (IRSRKARAVYPCEAEHSSELSFEIGAIFEDVQTSREPGWLEGTLNGKRGLIPQNYVKLL) folds into the SH3 domain.

In terms of assembly, interacts with PKN3. Interacts with caspase-activated PAK2 proteolytic fragment PAK-2p34; the interaction does not affect GRAF2/ARHGAP10 GTPase activation activity towards RHOA and CDC42. Interacts via its SH3 domain with PTK2/FAK1. Interacts with PTK2B/PYK2; the interaction negatively regulates GRAF2/ARHGAP10 GTPase-activating activity. Interacts with MICAL1 and WDR44; complex formation might transit from GRAF2/ARHGAP10-MICAL1 to GRAF2/ARHGAP10-WDR44 complexes. In terms of processing, phosphorylated. Phosphorylated in vitro by constitutive active PKN3. As to expression, high levels of expression in heart and skeletal muscle.

The protein localises to the cytoplasm. It is found in the perinuclear region. It localises to the cell membrane. Its subcellular location is the endosome membrane. Functionally, GTPase-activating protein that catalyzes the conversion of active GTP-bound Rho GTPases to their inactive GDP-bound form, thus suppressing various Rho GTPase-mediated cellular processes. Also converts Cdc42 to an inactive GDP-bound state. Essential for PTKB2 regulation of cytoskeletal organization via Rho family GTPases. Inhibits PAK2 proteolytic fragment PAK-2p34 kinase activity and changes its localization from the nucleus to the perinuclear region. Stabilizes PAK-2p34 thereby increasing stimulation of cell death. Associates with MICAL1 on the endosomal membrane to promote Rab8-Rab10-dependent tubule extension. After dissociation with MICAL1, recruits WDR44 which connects the endoplasmic reticulum (ER) with the endosomal tubule, thereby participating in the export of a subset of neosynthesized proteins. The protein is Rho GTPase-activating protein 10 (ARHGAP10) of Homo sapiens (Human).